The sequence spans 603 residues: F-box only protein 46 (603 aa).

The tract at residues 20–63 (YSQNQPRPPSAALKPSACPEPGGGAEPDHGPAHSENTPPALATE) is disordered. 2 positions are modified to phosphoserine; by ATM: serine 21 and serine 67. Disordered stretches follow at residues 111–163 (GGSR…PASA), 235–301 (EAQR…ARAK), 326–360 (LLARADEASEGDSPAPARPEDTPPAPPPPPARDCG), and 396–440 (TVSP…AEGT). Residues 152-163 (GPPAAEEGPASA) are compositionally biased toward low complexity. At serine 338 the chain carries Phosphoserine. A Phosphothreonine modification is found at threonine 347. Composition is skewed to pro residues over residues 347-356 (TPPAPPPPPA) and 417-426 (DGPPEPPPAD). The 53-residue stretch at 470–522 (RQYMLLLPEHVLVKIFSFLPTRALAALKCTCHHFKGIIEAFGVRATDSRWSRD) folds into the F-box domain.

In terms of assembly, part of a SCF (SKP1-cullin-F-box) protein ligase complex SCF(FBXO46) composed of CUL1, SKP1, RBX1 and FBXO46. Post-translationally, phosphorylated by ATM in response to DNA damage, promoting ubiquitination and degradation by the SCF(FBXO31) complex. ATM-phosphorylated FBXO46 is ubiquitinated and degradaded by the SCF(FBXO31) complex in response to DNA damage.

It participates in protein modification; protein ubiquitination. Substrate-recognition component of the SCF(FBXO46) protein ligase complex, which mediates the ubiquitination and degradation of target proteins. In absence of stress, the SCF(FBXO46) complex catalyzes ubiquitination and degradation of MTOR-phosphorylated FBXO31. This chain is F-box only protein 46, found in Homo sapiens (Human).